The following is a 1218-amino-acid chain: Coatomer subunit alpha-1 (1218 aa).

WD repeat units lie at residues 7-48 (TKSN…DRFD), 49-88 (EHDG…CLFT), 91-132 (GHLD…AVLT), 133-172 (GHNH…KKTV), 202-241 (GHDR…AWEV), 246-285 (GHMN…GIQT), 288-326 (REHD…PAFS), 363-404 (SLNQ…AGRA), and 450-489 (PLPI…GELQ). Residues 857–882 (NGGDGFDAEEGEANEEDGEEGGWDLE) form a disordered region. Positions 862–882 (FDAEEGEANEEDGEEGGWDLE) are enriched in acidic residues.

Oligomeric complex that consists of at least the alpha, beta, beta', gamma, delta, epsilon and zeta subunits.

It localises to the cytoplasm. The protein resides in the golgi apparatus membrane. Its subcellular location is the cytoplasmic vesicle. The protein localises to the COPI-coated vesicle membrane. Functionally, the coatomer is a cytosolic protein complex that binds to dilysine motifs and reversibly associates with Golgi non-clathrin-coated vesicles, which further mediate biosynthetic protein transport from the ER, via the Golgi up to the trans Golgi network. Coatomer complex is required for budding from Golgi membranes, and is essential for the retrograde Golgi-to-ER transport of dilysine-tagged proteins. In Oryza sativa subsp. japonica (Rice), this protein is Coatomer subunit alpha-1.